The sequence spans 119 residues: Large ribosomal subunit protein bL20 (119 aa).

This sequence belongs to the bacterial ribosomal protein bL20 family.

Functionally, binds directly to 23S ribosomal RNA and is necessary for the in vitro assembly process of the 50S ribosomal subunit. It is not involved in the protein synthesizing functions of that subunit. In Erythrobacter litoralis (strain HTCC2594), this protein is Large ribosomal subunit protein bL20.